The chain runs to 438 residues: Tol-Pal system protein TolB (438 aa).

A signal peptide spans 1–35 (MITMKNILKLRATGLLLLLLLMISVLGNGIGQAMA).

This sequence belongs to the TolB family. As to quaternary structure, the Tol-Pal system is composed of five core proteins: the inner membrane proteins TolA, TolQ and TolR, the periplasmic protein TolB and the outer membrane protein Pal. They form a network linking the inner and outer membranes and the peptidoglycan layer.

It localises to the periplasm. Functionally, part of the Tol-Pal system, which plays a role in outer membrane invagination during cell division and is important for maintaining outer membrane integrity. The chain is Tol-Pal system protein TolB from Desulfotalea psychrophila (strain LSv54 / DSM 12343).